A 28-amino-acid chain; its full sequence is Beta-bungarotoxin B chain-like (28 aa).

Residues 1–24 (MSSGGLLLLLGLLTLCAELTPVSS) form the signal peptide.

In terms of assembly, heterodimer; disulfide-linked. The A chains have phospholipase A2 activity and the B chains show homology with the basic protease inhibitors. As to expression, expressed by the venom gland.

The protein localises to the secreted. Functionally, beta-1-bungarotoxin is a presynaptic neurotoxin of the venom. The B chain is homologous to venom basic protease inhibitors but has no protease inhibitor activity and blocks voltage-gated potassium channels (Kv). This chain is Beta-bungarotoxin B chain-like, found in Bungarus multicinctus (Many-banded krait).